The chain runs to 231 residues: NAD(+) ADP-ribosyltransferase (231 aa).

The catalysed reaction is NAD(+) + (ADP-D-ribosyl)n-acceptor = nicotinamide + (ADP-D-ribosyl)n+1-acceptor + H(+).. With respect to regulation, activity increases up to 5-6 times with Mg(2+) at 50 uM or higher ion concentration. 3-aminobenzamide (3-ABA) inhibits the activity by up to half and nicotinamide to a lesser extent. Zn(2+) inhibits the activity to half-maximal rate but at 500 uM concentration of the ion. In terms of biological role, catalyzes auto- and hetero-ADP ribosylation and produces short oligomers by elongating the ADP-ribose chain (up to 6-mer). Binds DNA non-specifically but with high affinity. Forms very stable complexes with circular DNA wherein the circular DNA confers thermostability compared to linear DNA. The chain is NAD(+) ADP-ribosyltransferase from Saccharolobus solfataricus (Sulfolobus solfataricus).